Reading from the N-terminus, the 631-residue chain is DNA ligase (631 aa).

Residues 37–41 (DAHYD) and 79–80 (ST) contribute to the NAD(+) site. The N6-AMP-lysine intermediate role is filled by Lys115. Residues Arg131, Glu160, and Lys272 each contribute to the NAD(+) site. Zn(2+)-binding residues include Cys361, Cys364, Cys377, and Cys382. A BRCT domain is found at 539–630 (DVSSPISGKG…SQSSPEQMSL (92 aa)).

The protein belongs to the NAD-dependent DNA ligase family. LigA subfamily. It depends on Mg(2+) as a cofactor. Requires Mn(2+) as cofactor.

It carries out the reaction NAD(+) + (deoxyribonucleotide)n-3'-hydroxyl + 5'-phospho-(deoxyribonucleotide)m = (deoxyribonucleotide)n+m + AMP + beta-nicotinamide D-nucleotide.. Functionally, DNA ligase that catalyzes the formation of phosphodiester linkages between 5'-phosphoryl and 3'-hydroxyl groups in double-stranded DNA using NAD as a coenzyme and as the energy source for the reaction. It is essential for DNA replication and repair of damaged DNA. The protein is DNA ligase of Desulfatibacillum aliphaticivorans.